The chain runs to 283 residues: Thymidylate synthase (283 aa).

R22 is a binding site for dUMP. Residue C160 is the Nucleophile of the active site. Residues 180 to 183 (RSCD), N191, and 221 to 223 (HIY) contribute to the dUMP site. Residue D183 participates in (6R)-5,10-methylene-5,6,7,8-tetrahydrofolate binding. A (6R)-5,10-methylene-5,6,7,8-tetrahydrofolate-binding site is contributed by S282.

This sequence belongs to the thymidylate synthase family. Bacterial-type ThyA subfamily. In terms of assembly, homodimer.

It is found in the cytoplasm. The enzyme catalyses dUMP + (6R)-5,10-methylene-5,6,7,8-tetrahydrofolate = 7,8-dihydrofolate + dTMP. It functions in the pathway pyrimidine metabolism; dTTP biosynthesis. Catalyzes the reductive methylation of 2'-deoxyuridine-5'-monophosphate (dUMP) to 2'-deoxythymidine-5'-monophosphate (dTMP) while utilizing 5,10-methylenetetrahydrofolate (mTHF) as the methyl donor and reductant in the reaction, yielding dihydrofolate (DHF) as a by-product. This enzymatic reaction provides an intracellular de novo source of dTMP, an essential precursor for DNA biosynthesis. This Pseudoalteromonas translucida (strain TAC 125) protein is Thymidylate synthase.